A 184-amino-acid chain; its full sequence is RNA polymerase sigma factor HrpL (184 aa).

The short motif at 49–62 (DILQCVFLEALRNE) is the Polymerase core binding element. A DNA-binding region (H-T-H motif) is located at residues 151-170 (YQETANTLGVPIGTVRSRLS).

This sequence belongs to the sigma-70 factor family. ECF subfamily.

Functionally, sigma factors are initiation factors that promote the attachment of RNA polymerase to specific initiation sites and are then released. This sigma factor is involved in the activation of hprD as well as other hrp loci which are involved in plant pathogenicity, hrmA and avr genes. The chain is RNA polymerase sigma factor HrpL (hrpL) from Pseudomonas syringae pv. syringae.